A 324-amino-acid chain; its full sequence is Corticotropin-releasing factor-binding protein (324 aa).

The N-terminal stretch at 1-23 is a signal peptide; the sequence is MAPTLKLQCHFILVCLLALRGES. 5 disulfides stabilise this stretch: cysteine 62–cysteine 83, cysteine 106–cysteine 143, cysteine 185–cysteine 207, cysteine 239–cysteine 266, and cysteine 279–cysteine 320. N-linked (GlcNAc...) asparagine glycosylation occurs at asparagine 206.

The protein belongs to the CRF-binding protein family.

The protein localises to the secreted. Functionally, binds CRF and inactivates it. May prevent inappropriate pituitary-adrenal stimulation in pregnancy. This is Corticotropin-releasing factor-binding protein (CRHBP) from Ovis aries (Sheep).